A 413-amino-acid chain; its full sequence is MTEASSGPAAKYPLTPSVMHALEVSKRGCDELLIEAEWLQKLARSEATGVPLRIKLGLDPTAPDIHIGHTVVLNKLRQLQDLGHQVIFLIGDFTSTIGDPSGRNSTRPPLTREQIEANAQTYYRQASLVLDPARTEIRYNSEWCDPLGARGMIQLAAKYTVARMMERDDFTKRFRSGIPISVHEFLYPLMQGYDSVALKSDLELGGTDQKFNLLVGRELQKEYGQEPQCILTMPLLVGLDGVEKMSKSKGNYVGVTEAPNEMFGKLMSISDDLMWQYFTLLSFRPLAEIDLMKQEIAAGRNPRDCKVLLAQEIVARFHSQADAEKALEDFNHRARGGVPDDIPAVSLSGAPLGIAQLLKQANLVPSTSEANRNIEQGGVKIDGATVSDKAVKVAAGTYVVQVGKRRFARVTLA.

The 'HIGH' region signature appears at 60-69 (PTAPDIHIGH). The short motif at 244-248 (KMSKS) is the 'KMSKS' region element. Residue lysine 247 participates in ATP binding. One can recognise an S4 RNA-binding domain in the interval 352 to 412 (LGIAQLLKQA…GKRRFARVTL (61 aa)).

The protein belongs to the class-I aminoacyl-tRNA synthetase family. TyrS type 2 subfamily. In terms of assembly, homodimer.

Its subcellular location is the cytoplasm. The enzyme catalyses tRNA(Tyr) + L-tyrosine + ATP = L-tyrosyl-tRNA(Tyr) + AMP + diphosphate + H(+). Functionally, catalyzes the attachment of tyrosine to tRNA(Tyr) in a two-step reaction: tyrosine is first activated by ATP to form Tyr-AMP and then transferred to the acceptor end of tRNA(Tyr). The chain is Tyrosine--tRNA ligase from Cupriavidus pinatubonensis (strain JMP 134 / LMG 1197) (Cupriavidus necator (strain JMP 134)).